Here is a 105-residue protein sequence, read N- to C-terminus: Large ribosomal subunit protein P2 (105 aa).

Residues 84–105 (AEAKKEEPEEEADDDMGFGLFD) form a disordered region.

Belongs to the eukaryotic ribosomal protein P1/P2 family. P1 and P2 exist as dimers at the large ribosomal subunit. In terms of processing, phosphorylated.

Its function is as follows. Plays an important role in the elongation step of protein synthesis. This Leishmania donovani protein is Large ribosomal subunit protein P2 (ARP-1).